The chain runs to 142 residues: Ribosomal RNA large subunit methyltransferase H (142 aa).

The S-adenosyl-L-methionine site is built by leucine 55 and glycine 87.

Belongs to the RNA methyltransferase RlmH family. As to quaternary structure, homodimer.

The protein localises to the cytoplasm. It catalyses the reaction pseudouridine(1915) in 23S rRNA + S-adenosyl-L-methionine = N(3)-methylpseudouridine(1915) in 23S rRNA + S-adenosyl-L-homocysteine + H(+). Specifically methylates the pseudouridine at position 1915 (m3Psi1915) in 23S rRNA. This chain is Ribosomal RNA large subunit methyltransferase H, found in Sphingopyxis alaskensis (strain DSM 13593 / LMG 18877 / RB2256) (Sphingomonas alaskensis).